The primary structure comprises 123 residues: Large ribosomal subunit protein bL20 (123 aa).

Residues 1–15 (MARVKRSVNAKKKRR) show a composition bias toward basic residues. The interval 1-23 (MARVKRSVNAKKKRREVLDQASG) is disordered.

It belongs to the bacterial ribosomal protein bL20 family.

Binds directly to 23S ribosomal RNA and is necessary for the in vitro assembly process of the 50S ribosomal subunit. It is not involved in the protein synthesizing functions of that subunit. The chain is Large ribosomal subunit protein bL20 from Cutibacterium acnes (strain DSM 16379 / KPA171202) (Propionibacterium acnes).